We begin with the raw amino-acid sequence, 1063 residues long: Structural polyprotein (1063 aa).

Residues 23 to 131 (LRAELAAGAS…LGPPTNPFQA (109 aa)) form a disordered region. Residues 30-69 (GASQLRRPRPPRQRDSSTSGDDSGRDSGGPRRRRGNRGRG) form a human C1QBP/SF2P32-binding region. Serine 46 carries the post-translational modification Phosphoserine; by host. The span at 59 to 69 (PRRRRGNRGRG) shows a compositional bias: basic residues. Over residues 70–87 (QRKDWSKAPPPPEERQES) the composition is skewed to basic and acidic residues. Residues 93–107 (VPKPPRAPPQPPQPP) show a composition bias toward pro residues. Residues cysteine 153 and cysteine 197 are joined by a disulfide bond. Residues 279–300 (GAPQVFLAGLLLAAVAVGTARA) form a functions as E2 signal peptide region. Over 301-534 (GLQPRTDIAA…LWLATANALS (234 aa)) the chain is Extracellular. The segment at 305-327 (RTDIAAPPAPPQAPRAHGKHYGH) is disordered. Residues asparagine 353, asparagine 371, asparagine 410, and asparagine 429 are each glycosylated (N-linked (GlcNAc...) asparagine; by host). Residues 535–555 (LDHALAAVVLLVPWVLIFMLC) traverse the membrane as a helical segment. Topologically, residues 556 to 582 (RRACRRRGAAAALTAVVLQGYNPPAYG) are cytoplasmic. Positions 562–582 (RGAAAALTAVVLQGYNPPAYG) are functions as E1 signal peptide. Residues 583–1028 (EEAFTYLCTA…QTWAEWAAAH (446 aa)) are Extracellular-facing. 8 cysteine pairs are disulfide-bonded: cysteine 590-cysteine 595, cysteine 619-cysteine 824, cysteine 641-cysteine 653, cysteine 699-cysteine 712, cysteine 758-cysteine 767, cysteine 807-cysteine 817, cysteine 931-cysteine 934, and cysteine 950-cysteine 983. Residue asparagine 658 is glycosylated (N-linked (GlcNAc...) asparagine; by host). Ca(2+)-binding residues include asparagine 670 and alanine 671. 2 residues coordinate Ca(2+): aspartate 718 and threonine 719. N-linked (GlcNAc...) asparagine; by host glycans are attached at residues asparagine 759 and asparagine 791. 2 O-linked (GalNAc...) threonine; by host glycosylation sites follow: threonine 1011 and threonine 1012. Residues 1029-1049 (WWQLTLGAICALLLAGLLACC) form a helical membrane-spanning segment. Over 1050–1063 (AKCLYHLRGAIAPR) the chain is Extracellular.

As to quaternary structure, homodimer; further assembles into homooligomer. Interacts with human C1QBP. Interacts (via N-terminus) with protease/methyltransferase p150. Heterodimer with spike glycoprotein E2. In terms of assembly, heterodimer with spike glycoprotein E1. Structural polyprotein: Specific enzymatic cleavages in vivo yield mature proteins. Two signal peptidase-mediated cleavages within the polyprotein produce the structural proteins capsid, E2, and E1. The E2 signal peptide remains attached to the C-terminus of the capsid protein after cleavage by the signal peptidase. Another signal peptide at E2 C-terminus directs E1 to the ER, with a similar mechanism. Post-translationally, contains three N-linked oligosaccharides. In terms of processing, capsid is phosphorylated on Ser-46 by host. This phosphorylation negatively regulates capsid protein RNA-binding activity. Dephosphorylated by human PP1A.

It localises to the virion. The protein localises to the host cytoplasm. It is found in the host mitochondrion. The protein resides in the virion membrane. Its subcellular location is the host Golgi apparatus membrane. In terms of biological role, capsid protein interacts with genomic RNA and assembles into icosahedric core particles 65-70 nm in diameter. The resulting nucleocapsid eventually associates with the cytoplasmic domain of E2 at the cell membrane, leading to budding and formation of mature virions from host Golgi membranes. Phosphorylation negatively regulates RNA-binding activity, possibly delaying virion assembly during the viral replication phase. Capsid protein dimerizes and becomes disulfide-linked in the virion. Modulates genomic RNA replication. Modulates subgenomic RNA synthesis by interacting with human C1QBP/SF2P32. Induces both perinuclear clustering of mitochondria and the formation of electron-dense intermitochondrial plaques, both hallmarks of rubella virus infected cells. Induces apoptosis when expressed in transfected cells. Functionally, responsible for viral attachment to target host cell, by binding to the cell receptor. Its transport to the plasma membrane depends on interaction with E1 protein. The surface glycoproteins display an irregular helical organization and a pseudo-tetrameric inner nucleocapsid arrangement. Class II viral fusion protein. Fusion activity is inactive as long as E1 is bound to E2 in mature virion. After virus attachment to target cell and clathrin-mediated endocytosis, acidification of the endosome would induce dissociation of E1/E2 heterodimer and concomitant trimerization of the E1 subunits. This E1 homotrimer is fusion active, and promotes release of viral nucleocapsid in cytoplasm after endosome and viral membrane fusion. The cytoplasmic tail of spike glycoprotein E1 modulates virus release. The surface glycoproteins display an irregular helical organization and a pseudo-tetrameric inner nucleocapsid arrangement. The polypeptide is Structural polyprotein (Homo sapiens (Human)).